The sequence spans 192 residues: Protein A16 (192 aa).

Positions 1 to 22 (MLLANTAAAVLLLIVCIGASVG) are cleaved as a signal peptide. Residues 71–186 (KNKKFTIGTL…CLNPLNIFPY (116 aa)) form the C-type lectin domain. Cysteines 163 and 177 form a disulfide.

As to expression, expressed in the gut of adults.

The polypeptide is Protein A16 (CTL3) (Anopheles gambiae (African malaria mosquito)).